The chain runs to 254 residues: Imidazole glycerol phosphate synthase subunit HisF (254 aa).

Catalysis depends on residues aspartate 12 and aspartate 131.

The protein belongs to the HisA/HisF family. Heterodimer of HisH and HisF.

It localises to the cytoplasm. It catalyses the reaction 5-[(5-phospho-1-deoxy-D-ribulos-1-ylimino)methylamino]-1-(5-phospho-beta-D-ribosyl)imidazole-4-carboxamide + L-glutamine = D-erythro-1-(imidazol-4-yl)glycerol 3-phosphate + 5-amino-1-(5-phospho-beta-D-ribosyl)imidazole-4-carboxamide + L-glutamate + H(+). The protein operates within amino-acid biosynthesis; L-histidine biosynthesis; L-histidine from 5-phospho-alpha-D-ribose 1-diphosphate: step 5/9. Its function is as follows. IGPS catalyzes the conversion of PRFAR and glutamine to IGP, AICAR and glutamate. The HisF subunit catalyzes the cyclization activity that produces IGP and AICAR from PRFAR using the ammonia provided by the HisH subunit. The polypeptide is Imidazole glycerol phosphate synthase subunit HisF (Leuconostoc mesenteroides subsp. mesenteroides (strain ATCC 8293 / DSM 20343 / BCRC 11652 / CCM 1803 / JCM 6124 / NCDO 523 / NBRC 100496 / NCIMB 8023 / NCTC 12954 / NRRL B-1118 / 37Y)).